Reading from the N-terminus, the 140-residue chain is Nucleoside diphosphate kinase (140 aa).

6 residues coordinate ATP: Lys-11, Phe-59, Arg-87, Thr-93, Arg-104, and Asn-114. His-117 (pros-phosphohistidine intermediate) is an active-site residue.

Belongs to the NDK family. As to quaternary structure, homotetramer. Mg(2+) is required as a cofactor.

It is found in the cytoplasm. It carries out the reaction a 2'-deoxyribonucleoside 5'-diphosphate + ATP = a 2'-deoxyribonucleoside 5'-triphosphate + ADP. The enzyme catalyses a ribonucleoside 5'-diphosphate + ATP = a ribonucleoside 5'-triphosphate + ADP. Functionally, major role in the synthesis of nucleoside triphosphates other than ATP. The ATP gamma phosphate is transferred to the NDP beta phosphate via a ping-pong mechanism, using a phosphorylated active-site intermediate. The protein is Nucleoside diphosphate kinase of Mesorhizobium japonicum (strain LMG 29417 / CECT 9101 / MAFF 303099) (Mesorhizobium loti (strain MAFF 303099)).